Consider the following 860-residue polypeptide: MQEQYRPEEIESKVQLHWDEKRTFEVTEDESKEKYYCLSMLPYPSGRLHMGHVRNYTIGDVIARYQRMLGKNVLQPIGWDAFGLPAEGAAVKNNTAPAPWTYDNIAYMKNQLKMLGFGYDWSRELATCTPEYYRWEQKFFTELYKKGLVYKKTSAVNWCPNDQTVLANEQVIDGCCWRCDTKVERKEIPQWFIKITAYADELLNDLDKLDHWPDTVKTMQRNWIGRSEGVEITFNVNDYDNTLTVYTTRPDTFMGCTYLAVAAGHPLAQKAAENNPELAAFIDECRNTKVAEAEMATMEKKGVDTGFKAVHPLTGEEIPVWAANFVLMEYGTGAVMAVPGHDQRDYEFASKYGLNIKPVILAADGSEPDLSQQALTEKGVLFNSGEFNGLDHEAAFNAIADKLTAMGVGERKVNYRLRDWGVSRQRYWGAPIPMVTLEDGTVMPTPDDQLPVILPEDVVMDGITSPIKADPEWAKTTVNGMPALRETDTFDTFMESSWYYARYTCPQYKEGMLDSEAANYWLPVDIYIGGIEHAIMHLLYFRFFHKLMRDAGMVNSDEPAKQLLCQGMVLADAFYYVGENGERNWVSPVDAIVERDEKGRIVKAKDAAGHELVYTGMSKMSKSKNNGIDPQVMVERYGADTVRLFMMFASPADMTLEWQESGVEGANRFLKRVWKLVYEHTAKGDVAALNVDALTENQKALRRDVHKTIAKVTDDIGRRQTFNTAIAAIMELMNKLAKAPTDGEQDRALMQEALLAVVRMLNPFTPHICFTLWQELKGEGDIDNAPWPVADEKAMVEDSTLVVVQVNGKVRAKITVPVDATEEQVRERAGQEHLVAKYLDGVTVRKVIYVPGKLLNLVVG.

The 'HIGH' region signature appears at 42-52 (PYPSGRLHMGH). The 'KMSKS' region motif lies at 619-623 (KMSKS). Residue K622 coordinates ATP.

It belongs to the class-I aminoacyl-tRNA synthetase family.

The protein resides in the cytoplasm. The catalysed reaction is tRNA(Leu) + L-leucine + ATP = L-leucyl-tRNA(Leu) + AMP + diphosphate. The chain is Leucine--tRNA ligase from Escherichia coli (strain K12 / MC4100 / BW2952).